The following is a 294-amino-acid chain: Diaminopimelate epimerase (294 aa).

Residues Asn-11 and Asn-78 each contribute to the substrate site. The active-site Proton donor is the Cys-87. Residues 88 to 89 (GN), Asn-167, Asn-203, and 221 to 222 (ER) each bind substrate. The Proton acceptor role is filled by Cys-230. A substrate-binding site is contributed by 231 to 232 (GT).

Belongs to the diaminopimelate epimerase family. As to quaternary structure, homodimer.

Its subcellular location is the cytoplasm. The catalysed reaction is (2S,6S)-2,6-diaminopimelate = meso-2,6-diaminopimelate. The protein operates within amino-acid biosynthesis; L-lysine biosynthesis via DAP pathway; DL-2,6-diaminopimelate from LL-2,6-diaminopimelate: step 1/1. Catalyzes the stereoinversion of LL-2,6-diaminopimelate (L,L-DAP) to meso-diaminopimelate (meso-DAP), a precursor of L-lysine and an essential component of the bacterial peptidoglycan. The polypeptide is Diaminopimelate epimerase (Mycobacterium avium (strain 104)).